The primary structure comprises 61 residues: Beta-defensin 133 (61 aa).

The N-terminal stretch at 1–23 (MKIHVFLFVLFFFLVPIATRVKC) is a signal peptide. Intrachain disulfides connect C31-C59 and C38-C52.

It belongs to the beta-defensin family.

It localises to the secreted. Functionally, has antibacterial activity. In Homo sapiens (Human), this protein is Beta-defensin 133 (DEFB133).